A 260-amino-acid chain; its full sequence is Chloride intracellular channel Clic (260 aa).

The chain crosses the membrane as a helical span at residues 42–66 (FCQEYFMDLYLLAELKTISLKVTTV).

The protein belongs to the chloride channel CLIC family. In terms of tissue distribution, expressed in cardiac tubes.

It is found in the mitochondrion. Its subcellular location is the membrane. Its function is as follows. Might insert into membranes and form chloride ion channels. Channel activity depends on the pH. May play a role in ethanol sensitivity. The chain is Chloride intracellular channel Clic from Drosophila melanogaster (Fruit fly).